The chain runs to 245 residues: 3-deoxy-manno-octulosonate cytidylyltransferase (245 aa).

It belongs to the KdsB family.

The protein localises to the cytoplasm. It carries out the reaction 3-deoxy-alpha-D-manno-oct-2-ulosonate + CTP = CMP-3-deoxy-beta-D-manno-octulosonate + diphosphate. Its pathway is nucleotide-sugar biosynthesis; CMP-3-deoxy-D-manno-octulosonate biosynthesis; CMP-3-deoxy-D-manno-octulosonate from 3-deoxy-D-manno-octulosonate and CTP: step 1/1. It functions in the pathway bacterial outer membrane biogenesis; lipopolysaccharide biosynthesis. Activates KDO (a required 8-carbon sugar) for incorporation into bacterial lipopolysaccharide in Gram-negative bacteria. This Rhodopseudomonas palustris (strain HaA2) protein is 3-deoxy-manno-octulosonate cytidylyltransferase.